A 142-amino-acid polypeptide reads, in one-letter code: Ribosome maturation factor RimP (142 aa).

Belongs to the RimP family.

It localises to the cytoplasm. Functionally, required for maturation of 30S ribosomal subunits. This is Ribosome maturation factor RimP from Wolinella succinogenes (strain ATCC 29543 / DSM 1740 / CCUG 13145 / JCM 31913 / LMG 7466 / NCTC 11488 / FDC 602W) (Vibrio succinogenes).